Here is a 388-residue protein sequence, read N- to C-terminus: Succinyl-diaminopimelate desuccinylase (388 aa).

Position 71 (histidine 71) interacts with Zn(2+). Aspartate 73 is an active-site residue. Position 104 (aspartate 104) interacts with Zn(2+). The Proton acceptor role is filled by glutamate 143. The Zn(2+) site is built by glutamate 144, glutamate 172, and histidine 361.

It belongs to the peptidase M20A family. DapE subfamily. In terms of assembly, homodimer. Requires Zn(2+) as cofactor. It depends on Co(2+) as a cofactor.

It catalyses the reaction N-succinyl-(2S,6S)-2,6-diaminopimelate + H2O = (2S,6S)-2,6-diaminopimelate + succinate. The protein operates within amino-acid biosynthesis; L-lysine biosynthesis via DAP pathway; LL-2,6-diaminopimelate from (S)-tetrahydrodipicolinate (succinylase route): step 3/3. Catalyzes the hydrolysis of N-succinyl-L,L-diaminopimelic acid (SDAP), forming succinate and LL-2,6-diaminopimelate (DAP), an intermediate involved in the bacterial biosynthesis of lysine and meso-diaminopimelic acid, an essential component of bacterial cell walls. In Bradyrhizobium diazoefficiens (strain JCM 10833 / BCRC 13528 / IAM 13628 / NBRC 14792 / USDA 110), this protein is Succinyl-diaminopimelate desuccinylase.